A 208-amino-acid chain; its full sequence is Small ribosomal subunit protein eS1 (208 aa).

The protein belongs to the eukaryotic ribosomal protein eS1 family.

The sequence is that of Small ribosomal subunit protein eS1 from Saccharolobus solfataricus (strain ATCC 35092 / DSM 1617 / JCM 11322 / P2) (Sulfolobus solfataricus).